A 99-amino-acid chain; its full sequence is Nucleoid-associated protein LACR_0106 (99 aa).

The protein belongs to the YbaB/EbfC family. In terms of assembly, homodimer.

Its subcellular location is the cytoplasm. It is found in the nucleoid. In terms of biological role, binds to DNA and alters its conformation. May be involved in regulation of gene expression, nucleoid organization and DNA protection. The sequence is that of Nucleoid-associated protein LACR_0106 from Lactococcus lactis subsp. cremoris (strain SK11).